The sequence spans 363 residues: UDP-N-acetylglucosamine--N-acetylmuramyl-(pentapeptide) pyrophosphoryl-undecaprenol N-acetylglucosamine transferase (363 aa).

UDP-N-acetyl-alpha-D-glucosamine-binding positions include 10 to 12 (TAG), N124, R161, S195, and Q291.

It belongs to the glycosyltransferase 28 family. MurG subfamily.

The protein localises to the cell membrane. It carries out the reaction di-trans,octa-cis-undecaprenyl diphospho-N-acetyl-alpha-D-muramoyl-L-alanyl-D-glutamyl-meso-2,6-diaminopimeloyl-D-alanyl-D-alanine + UDP-N-acetyl-alpha-D-glucosamine = di-trans,octa-cis-undecaprenyl diphospho-[N-acetyl-alpha-D-glucosaminyl-(1-&gt;4)]-N-acetyl-alpha-D-muramoyl-L-alanyl-D-glutamyl-meso-2,6-diaminopimeloyl-D-alanyl-D-alanine + UDP + H(+). Its pathway is cell wall biogenesis; peptidoglycan biosynthesis. Cell wall formation. Catalyzes the transfer of a GlcNAc subunit on undecaprenyl-pyrophosphoryl-MurNAc-pentapeptide (lipid intermediate I) to form undecaprenyl-pyrophosphoryl-MurNAc-(pentapeptide)GlcNAc (lipid intermediate II). This Streptomyces avermitilis (strain ATCC 31267 / DSM 46492 / JCM 5070 / NBRC 14893 / NCIMB 12804 / NRRL 8165 / MA-4680) protein is UDP-N-acetylglucosamine--N-acetylmuramyl-(pentapeptide) pyrophosphoryl-undecaprenol N-acetylglucosamine transferase.